Consider the following 608-residue polypeptide: Leucine aminopeptidase 2 (608 aa).

Substrate is bound by residues 134 to 136 (QCQ) and 269 to 274 (PYGGME). H298 provides a ligand contact to Zn(2+). The active-site Proton acceptor is the E299. Zn(2+) contacts are provided by H302 and E321. Y386 (proton donor) is an active-site residue.

This sequence belongs to the peptidase M1 family. Zn(2+) serves as cofactor.

It is found in the cytoplasm. The protein localises to the nucleus. It carries out the reaction an epoxide + H2O = an ethanediol. Aminopeptidase that preferentially cleaves di- and tripeptides. Also has low epoxide hydrolase activity (in vitro). Can hydrolyze the epoxide leukotriene LTA(4) but it forms preferentially 5,6-dihydroxy-7,9,11,14-eicosatetraenoic acid rather than the cytokine leukotriene B(4) as the product compared to the homologous mammalian enzyme (in vitro). This Sclerotinia sclerotiorum (strain ATCC 18683 / 1980 / Ss-1) (White mold) protein is Leucine aminopeptidase 2.